The following is a 157-amino-acid chain: 2-C-methyl-D-erythritol 2,4-cyclodiphosphate synthase (157 aa).

A divalent metal cation contacts are provided by D8 and H10. 4-CDP-2-C-methyl-D-erythritol 2-phosphate contacts are provided by residues 8 to 10 and 34 to 35; these read DVH and HS. H42 provides a ligand contact to a divalent metal cation. Residues 56 to 58, 61 to 65, 100 to 106, 132 to 135, F139, and R142 contribute to the 4-CDP-2-C-methyl-D-erythritol 2-phosphate site; these read DIG, FPDTD, AQAPKMA, and TTTE.

The protein belongs to the IspF family. As to quaternary structure, homotrimer. Requires a divalent metal cation as cofactor.

The enzyme catalyses 4-CDP-2-C-methyl-D-erythritol 2-phosphate = 2-C-methyl-D-erythritol 2,4-cyclic diphosphate + CMP. The protein operates within isoprenoid biosynthesis; isopentenyl diphosphate biosynthesis via DXP pathway; isopentenyl diphosphate from 1-deoxy-D-xylulose 5-phosphate: step 4/6. Functionally, involved in the biosynthesis of isopentenyl diphosphate (IPP) and dimethylallyl diphosphate (DMAPP), two major building blocks of isoprenoid compounds. Catalyzes the conversion of 4-diphosphocytidyl-2-C-methyl-D-erythritol 2-phosphate (CDP-ME2P) to 2-C-methyl-D-erythritol 2,4-cyclodiphosphate (ME-CPP) with a corresponding release of cytidine 5-monophosphate (CMP). The chain is 2-C-methyl-D-erythritol 2,4-cyclodiphosphate synthase from Ectopseudomonas mendocina (strain ymp) (Pseudomonas mendocina).